Reading from the N-terminus, the 741-residue chain is D-(-)-3-hydroxybutyrate oligomer hydrolase (741 aa).

Residues 1–23 (MKTIQGKSPGRWYSRGMLLAAMA) form the signal peptide. A disordered region spans residues 45–68 (NGNAGGNGNNNGNNNGNTVSNTKP). The active-site Charge relay system is the Ser-338.

Belongs to the D-(-)-3-hydroxybutyrate oligomer hydrolase family.

The protein localises to the secreted. The catalysed reaction is (3R)-hydroxybutanoate dimer + H2O = 2 (R)-3-hydroxybutanoate + H(+). Its pathway is lipid metabolism; butanoate metabolism. Participates in the degradation of poly-3-hydroxybutyrate (PHB). It works downstream of poly(3-hydroxybutyrate) depolymerase, hydrolyzing D(-)-3-hydroxybutyrate oligomers of various length (3HB-oligomers) into 3HB-monomers. The protein is D-(-)-3-hydroxybutyrate oligomer hydrolase of Ralstonia pickettii (Burkholderia pickettii).